The sequence spans 161 residues: MGRQFAGICGARGSLYGCVVCNTYLTCSKELTSKAFTGSTGPATLFKRAWNVVYGRCEHRKMTTGWHTVRDVFCVTCNQKLGWMYEMAVSESQTYKETQVIIENANFEKIAGAIKDPLGEDRQEAPPAPNLEMSRYPLEAEKKSRPQYRTVSVSSSSSAEC.

The 98-residue stretch at 14-111 folds into the Yippee domain; it reads SLYGCVVCNT…IENANFEKIA (98 aa). Residues C18, C21, C74, and C77 each contribute to the Zn(2+) site. The disordered stretch occupies residues 117 to 161; it reads PLGEDRQEAPPAPNLEMSRYPLEAEKKSRPQYRTVSVSSSSSAEC. The segment covering 151–161 has biased composition (low complexity); it reads VSVSSSSSAEC.

The protein belongs to the yippee family.

The protein is Protein yippee-like B0546.4 of Caenorhabditis elegans.